The chain runs to 396 residues: MPDEASANPSRKIFLIATEESGDRLGSSLMKALRRRLGCSVRFEGVGGQTMAREGLVSLFPIEELSIMGFTAVVKQLPMIVRRIRGTADAVIAAAPDVLVIIDSPDFTHRVARRVRARCRGLPIVDYVSPSVWAWRSGRARAMRSYVDHVLALLPFEPEAYRRLGGPPCTYVGHPLLEQIGVLRPDAQERQRRDADPPTLLVLPGSRRSEIRHHLSVFGETIGMLQQSIPEIEVVLPTTPHLVDEITPAVATWPRRPRVVIGEDDKRAAFRVARAALAKSGTVTLELALAGVPMVAAYKAGSVEAWIARRVIRVSSVILANLVIRENVIPEFLQEDCVPGKLAPALQEILTDSPMRRRQLKAFDGLNTIMATGQRSPSELAADIVIEAMRESRARM.

Belongs to the LpxB family.

It catalyses the reaction a lipid X + a UDP-2-N,3-O-bis[(3R)-3-hydroxyacyl]-alpha-D-glucosamine = a lipid A disaccharide + UDP + H(+). It functions in the pathway bacterial outer membrane biogenesis; LPS lipid A biosynthesis. Functionally, condensation of UDP-2,3-diacylglucosamine and 2,3-diacylglucosamine-1-phosphate to form lipid A disaccharide, a precursor of lipid A, a phosphorylated glycolipid that anchors the lipopolysaccharide to the outer membrane of the cell. The protein is Lipid-A-disaccharide synthase of Nitrobacter winogradskyi (strain ATCC 25391 / DSM 10237 / CIP 104748 / NCIMB 11846 / Nb-255).